Consider the following 143-residue polypeptide: Endoribonuclease YbeY (143 aa).

The Zn(2+) site is built by His-109, His-113, and Asp-119.

This sequence belongs to the endoribonuclease YbeY family. Requires Zn(2+) as cofactor.

Its subcellular location is the cytoplasm. Functionally, single strand-specific metallo-endoribonuclease involved in late-stage 70S ribosome quality control and in maturation of the 3' terminus of the 16S rRNA. This Christiangramia forsetii (strain DSM 17595 / CGMCC 1.15422 / KT0803) (Gramella forsetii) protein is Endoribonuclease YbeY.